Reading from the N-terminus, the 72-residue chain is Large ribosomal subunit protein bL28 (72 aa).

It belongs to the bacterial ribosomal protein bL28 family.

This chain is Large ribosomal subunit protein bL28, found in Pelodictyon phaeoclathratiforme (strain DSM 5477 / BU-1).